We begin with the raw amino-acid sequence, 143 residues long: Large ribosomal subunit protein uL11 (143 aa).

This sequence belongs to the universal ribosomal protein uL11 family. As to quaternary structure, part of the ribosomal stalk of the 50S ribosomal subunit. Interacts with L10 and the large rRNA to form the base of the stalk. L10 forms an elongated spine to which 2 L12 dimers bind in a sequential fashion forming a pentameric L10(L12)2(L12)2 complex. Post-translationally, one or more lysine residues are methylated.

Functionally, forms part of the ribosomal stalk which helps the ribosome interact with GTP-bound translation factors. In Agrobacterium fabrum (strain C58 / ATCC 33970) (Agrobacterium tumefaciens (strain C58)), this protein is Large ribosomal subunit protein uL11.